The chain runs to 180 residues: Probable DNA-directed RNA polymerase subunit delta (180 aa).

Residues 14 to 81 (LSMIEVARAI…GHNVWALRSW (68 aa)) form the HTH HARE-type domain. Residues 89-180 (EEVNHPEDEE…HQDDLDDDDE (92 aa)) are disordered. Residues 115–163 (DSDDDDIIDYDSDDPEDEDLDVDEEDTNEDDYSDDDLDDADDNELDDGI) are compositionally biased toward acidic residues.

This sequence belongs to the RpoE family. In terms of assembly, RNAP is composed of a core of 2 alpha, a beta and a beta' subunits. The core is associated with a delta subunit and one of several sigma factors.

Functionally, participates in both the initiation and recycling phases of transcription. In the presence of the delta subunit, RNAP displays an increased specificity of transcription, a decreased affinity for nucleic acids, and an increased efficiency of RNA synthesis because of enhanced recycling. The polypeptide is Probable DNA-directed RNA polymerase subunit delta (Lactobacillus johnsonii (strain CNCM I-12250 / La1 / NCC 533)).